A 237-amino-acid chain; its full sequence is Ubiquinone biosynthesis O-methyltransferase (237 aa).

S-adenosyl-L-methionine contacts are provided by Arg38, Gly57, Asp78, and Met122.

Belongs to the methyltransferase superfamily. UbiG/COQ3 family.

It carries out the reaction a 3-demethylubiquinol + S-adenosyl-L-methionine = a ubiquinol + S-adenosyl-L-homocysteine + H(+). The enzyme catalyses a 3-(all-trans-polyprenyl)benzene-1,2-diol + S-adenosyl-L-methionine = a 2-methoxy-6-(all-trans-polyprenyl)phenol + S-adenosyl-L-homocysteine + H(+). It functions in the pathway cofactor biosynthesis; ubiquinone biosynthesis. In terms of biological role, O-methyltransferase that catalyzes the 2 O-methylation steps in the ubiquinone biosynthetic pathway. This chain is Ubiquinone biosynthesis O-methyltransferase, found in Methylococcus capsulatus (strain ATCC 33009 / NCIMB 11132 / Bath).